We begin with the raw amino-acid sequence, 267 residues long: MSDLRLVIAGCGGRMGRALIEAVTSTPGVVLAGALERAESPLVGQDAGLPLGLTTGVRVSHDVDAALARADALIDFTRPEATLAYLAACRRHKVNMIIGTTGFDDAGKAAIRDAGQEIGIVFAPNFSVGVNLTFKLLDLAARVLNEGYDIEIIEAHHRHKVDAPSGTALRMGEVVADALGRDLKTCAVYGREGVTGERDPGTIGFATVRAGDVVGDHTVLFATPGERVEITHKASSRLTFANGAVRAARWLGKRHGQFDMQDVLGLR.

NAD(+)-binding positions include 10–15 (GCGGRM) and E36. R37 contacts NADP(+). NAD(+) contacts are provided by residues 99-101 (GTT) and 123-126 (APNF). H156 acts as the Proton donor/acceptor in catalysis. H157 provides a ligand contact to (S)-2,3,4,5-tetrahydrodipicolinate. K160 acts as the Proton donor in catalysis. 166–167 (GT) provides a ligand contact to (S)-2,3,4,5-tetrahydrodipicolinate.

This sequence belongs to the DapB family.

The protein localises to the cytoplasm. It catalyses the reaction (S)-2,3,4,5-tetrahydrodipicolinate + NAD(+) + H2O = (2S,4S)-4-hydroxy-2,3,4,5-tetrahydrodipicolinate + NADH + H(+). The enzyme catalyses (S)-2,3,4,5-tetrahydrodipicolinate + NADP(+) + H2O = (2S,4S)-4-hydroxy-2,3,4,5-tetrahydrodipicolinate + NADPH + H(+). The protein operates within amino-acid biosynthesis; L-lysine biosynthesis via DAP pathway; (S)-tetrahydrodipicolinate from L-aspartate: step 4/4. In terms of biological role, catalyzes the conversion of 4-hydroxy-tetrahydrodipicolinate (HTPA) to tetrahydrodipicolinate. This chain is 4-hydroxy-tetrahydrodipicolinate reductase, found in Laribacter hongkongensis (strain HLHK9).